The chain runs to 578 residues: MACGFRRSIACQLSRVLALPPESLIKSISAVPVSKKEEVADFQLSVDSLLEDNNHKSQVDTQDQARRLAEKLKCDTVVTAISAGPRTLNFKINRELLTKAVLQQVTEDGCKYGLKSELFSDLPKKRIVVEFSSPNIAKKFHVGHLRSTIIGNFIANLKEALGHQVTRINYIGDWGMQFGLLGTGFQLFGYEEKLQTNPLQHLFDVYVQVNKEATDDKNVTKLAHEFFHRLEMGDTQALSLWQRFRDLSIEEYTQIYKRLGIYFDEYSGESFYREKSQDVLKLLDSKGLLQKTAEGNVVVDLSGTGDLSSVCTVMRSDGTSLYATRDLAAAIHRMDKYNFDTMIYVADKGQRRHFQQVFQMLKIMGYDWAERCQHVPFGIVKGMKTRRGGVTFLEDVLNEVQSRMLQNMASIKTTKQLENPQETAERVGLAAVIIQDFRGTLLSDYQFSWDRVFQSRGDTGVFLQYTHARLCSLEETFGCGYLNDSNVACLQEPQSVSILQHLLRFDEVLYLSSQDLQPKHIVSYLLTLSHLAAVAHKTLQVKDSPPDVAGARLHLFKAVRSVLANGMKLLGITPVCRM.

The transit peptide at 1 to 16 (MACGFRRSIACQLSRV) directs the protein to the mitochondrion. Residues 133-135 (SPN), histidine 144, tyrosine 322, aspartate 326, and glutamine 350 contribute to the L-arginine site. The short motif at 133–144 (SPNIAKKFHVGH) is the 'HIGH' region element. An N6-acetyllysine modification is found at lysine 568.

This sequence belongs to the class-I aminoacyl-tRNA synthetase family.

The protein resides in the mitochondrion membrane. The enzyme catalyses tRNA(Arg) + L-arginine + ATP = L-arginyl-tRNA(Arg) + AMP + diphosphate. Its function is as follows. Catalyzes the attachment of arginine to tRNA(Arg) in a two-step reaction: arginine is first activated by ATP to form Arg-AMP and then transferred to the acceptor end of tRNA(Arg). This is Probable arginine--tRNA ligase, mitochondrial (Rars2) from Mus musculus (Mouse).